The sequence spans 89 residues: Small ribosomal subunit protein uS15 (89 aa).

This sequence belongs to the universal ribosomal protein uS15 family. As to quaternary structure, part of the 30S ribosomal subunit. Forms a bridge to the 50S subunit in the 70S ribosome, contacting the 23S rRNA.

In terms of biological role, one of the primary rRNA binding proteins, it binds directly to 16S rRNA where it helps nucleate assembly of the platform of the 30S subunit by binding and bridging several RNA helices of the 16S rRNA. Forms an intersubunit bridge (bridge B4) with the 23S rRNA of the 50S subunit in the ribosome. In Nitrosomonas eutropha (strain DSM 101675 / C91 / Nm57), this protein is Small ribosomal subunit protein uS15.